The following is a 324-amino-acid chain: Lipid droplet-associated hydrolase (324 aa).

The Nucleophile role is filled by Ser-136. Active-site charge relay system residues include Asp-270 and His-299.

This sequence belongs to the AB hydrolase superfamily. LDAH family.

The protein localises to the lipid droplet. It localises to the endoplasmic reticulum. It catalyses the reaction a cholesterol ester + H2O = cholesterol + a fatty acid + H(+). Functionally, probable serine lipid hydrolase associated with lipid droplets. Has low cholesterol esterase activity. Appears to lack triglyceride lipase activity. Involved in cholesterol and triglyceride homeostasis; stimulates cellular triglyceride accumulation and cellular cholesterol release. This chain is Lipid droplet-associated hydrolase, found in Gallus gallus (Chicken).